A 232-amino-acid polypeptide reads, in one-letter code: Ribonuclease 3 (232 aa).

The RNase III domain occupies 5-134; that stretch reads NDAISKIIDY…LIGAIYIDGG (130 aa). A Mg(2+)-binding site is contributed by E47. The active site involves D51. Residues N120 and E123 each contribute to the Mg(2+) site. E123 is an active-site residue. Residues 159–228 form the DRBM domain; it reads DPKTSLQEWT…AELMLEKIGK (70 aa).

This sequence belongs to the ribonuclease III family. Homodimer. Requires Mg(2+) as cofactor.

It localises to the cytoplasm. It catalyses the reaction Endonucleolytic cleavage to 5'-phosphomonoester.. In terms of biological role, digests double-stranded RNA. Involved in the processing of primary rRNA transcript to yield the immediate precursors to the large and small rRNAs (23S and 16S). Processes some mRNAs, and tRNAs when they are encoded in the rRNA operon. Processes pre-crRNA and tracrRNA of type II CRISPR loci if present in the organism. This chain is Ribonuclease 3, found in Wolbachia pipientis wMel.